The chain runs to 305 residues: UDP-N-acetylenolpyruvoylglucosamine reductase (305 aa).

Positions 34–199 (RVGGPAQVLF…TSARFRGEVK (166 aa)) constitute an FAD-binding PCMH-type domain. R179 is an active-site residue. The Proton donor role is filled by S228. Residue E298 is part of the active site.

It belongs to the MurB family. FAD is required as a cofactor.

The protein localises to the cytoplasm. It carries out the reaction UDP-N-acetyl-alpha-D-muramate + NADP(+) = UDP-N-acetyl-3-O-(1-carboxyvinyl)-alpha-D-glucosamine + NADPH + H(+). It functions in the pathway cell wall biogenesis; peptidoglycan biosynthesis. Functionally, cell wall formation. This chain is UDP-N-acetylenolpyruvoylglucosamine reductase, found in Bradyrhizobium diazoefficiens (strain JCM 10833 / BCRC 13528 / IAM 13628 / NBRC 14792 / USDA 110).